The chain runs to 446 residues: UDP-N-acetylmuramoylalanine--D-glutamate ligase (446 aa).

115–121 is a binding site for ATP; the sequence is GSNGKST.

This sequence belongs to the MurCDEF family.

It localises to the cytoplasm. The catalysed reaction is UDP-N-acetyl-alpha-D-muramoyl-L-alanine + D-glutamate + ATP = UDP-N-acetyl-alpha-D-muramoyl-L-alanyl-D-glutamate + ADP + phosphate + H(+). It functions in the pathway cell wall biogenesis; peptidoglycan biosynthesis. Functionally, cell wall formation. Catalyzes the addition of glutamate to the nucleotide precursor UDP-N-acetylmuramoyl-L-alanine (UMA). In Hahella chejuensis (strain KCTC 2396), this protein is UDP-N-acetylmuramoylalanine--D-glutamate ligase.